We begin with the raw amino-acid sequence, 888 residues long: CRISPR-associated endonuclease/helicase Cas3 (888 aa).

The 212-residue stretch at 20–231 (KGNDIHLLIY…AGFCSLADWL (212 aa)) folds into the HD Cas3-type domain. Residues D75 and H160 each coordinate Mg(2+). A Helicase ATP-binding domain is found at 301-504 (DALPVAPGLT…LDTYGLHTDP (204 aa)). 314–321 (APTGSGKT) lines the ATP pocket. Positions 452-455 (DEVH) match the DEAH box motif. Positions 556–735 (MLERMIAAAN…AYRQWLDSIY (180 aa)) constitute a Helicase C-terminal domain.

This sequence in the N-terminal section; belongs to the CRISPR-associated nuclease Cas3-HD family. It in the central section; belongs to the CRISPR-associated helicase Cas3 family. As to quaternary structure, interacts with the CasA subunit of Cascade once Cascade has recognized target DNA. Mg(2+) serves as cofactor.

In terms of biological role, CRISPR (clustered regularly interspaced short palindromic repeat), is an adaptive immune system that provides protection against mobile genetic elements (viruses, transposable elements and conjugative plasmids). CRISPR clusters contain sequences complementary to antecedent mobile elements and target invading nucleic acids. CRISPR clusters are transcribed and processed into CRISPR RNA (crRNA). Cas3 plus Cascade participate in CRISPR interference, the third stage of CRISPR immunity. Its function is as follows. Acts as an endonuclease, a 3'-5'exonuclease, and an ATP-dependent dsDNA helicase. Anneals and unwinds R-loops (in which crRNA binds the target DNA, displacing the noncomplementary strand). Unwinding requires ATP, annealing does not. Required along with the Cascade complex for resistance to bacteriophage lambda infection as well as the ability to cure CRISPR-encoding high-copy number plasmid. A Cas3-CasA fusion protein purified with the Cascade complex nicks target plasmid in the presence but not absence of Mg(2+), and degrades plasmid fully in the presence of Mg(2+) and ATP, suggesting the helicase activity is required for complete degradation. This is CRISPR-associated endonuclease/helicase Cas3 (ygcB) from Escherichia coli (strain K12).